Consider the following 270-residue polypeptide: MKSLFKVTLLATTMAVALHAPITFAAEAAKPATAADSKAAFKNDDQKSAYALGASLGRYMENSLKEQEKLGIKLDKDQLIAGVQDAFADKSKLSDQEIEQTLQAFEARVKSSAQAKMEKDAADNEAKGKEYREKFAKEKGVKTSSTGLVYQVVEAGKGEAPKDSDTVVVNYKGTLIDGKEFDNSYTRGEPLSFRLDGVIPGWTEGLKNIKKGGKIKLVIPPELAYGKAGVPGIPPNSTLVFDVELLDVKPAPKADAKPEADAKAADSAKK.

The signal sequence occupies residues 1-25; it reads MKSLFKVTLLATTMAVALHAPITFA. The region spanning 164–249 is the PPIase FKBP-type domain; it reads SDTVVVNYKG…VFDVELLDVK (86 aa).

The protein belongs to the FKBP-type PPIase family.

The protein localises to the periplasm. It catalyses the reaction [protein]-peptidylproline (omega=180) = [protein]-peptidylproline (omega=0). Functionally, PPIases accelerate the folding of proteins. It catalyzes the cis-trans isomerization of proline imidic peptide bonds in oligopeptides. The sequence is that of FKBP-type peptidyl-prolyl cis-trans isomerase FkpA (fkpA) from Escherichia coli (strain K12).